The primary structure comprises 205 residues: Guanylate kinase (205 aa).

In terms of domain architecture, Guanylate kinase-like spans 17 to 195 (PRLTVLSGPS…VSRELLALML (179 aa)). 24 to 31 (GPSGVGKS) lines the ATP pocket.

This sequence belongs to the guanylate kinase family.

It is found in the cytoplasm. It catalyses the reaction GMP + ATP = GDP + ADP. In terms of biological role, essential for recycling GMP and indirectly, cGMP. The polypeptide is Guanylate kinase (Streptomyces kasugaensis).